The chain runs to 176 residues: Crossover junction endodeoxyribonuclease RuvC (176 aa).

Residues Asp-7, Glu-67, and Asp-139 contribute to the active site. Mg(2+) contacts are provided by Asp-7, Glu-67, and Asp-139.

Belongs to the RuvC family. In terms of assembly, homodimer which binds Holliday junction (HJ) DNA. The HJ becomes 2-fold symmetrical on binding to RuvC with unstacked arms; it has a different conformation from HJ DNA in complex with RuvA. In the full resolvosome a probable DNA-RuvA(4)-RuvB(12)-RuvC(2) complex forms which resolves the HJ. Mg(2+) is required as a cofactor.

It localises to the cytoplasm. It carries out the reaction Endonucleolytic cleavage at a junction such as a reciprocal single-stranded crossover between two homologous DNA duplexes (Holliday junction).. Its function is as follows. The RuvA-RuvB-RuvC complex processes Holliday junction (HJ) DNA during genetic recombination and DNA repair. Endonuclease that resolves HJ intermediates. Cleaves cruciform DNA by making single-stranded nicks across the HJ at symmetrical positions within the homologous arms, yielding a 5'-phosphate and a 3'-hydroxyl group; requires a central core of homology in the junction. The consensus cleavage sequence is 5'-(A/T)TT(C/G)-3'. Cleavage occurs on the 3'-side of the TT dinucleotide at the point of strand exchange. HJ branch migration catalyzed by RuvA-RuvB allows RuvC to scan DNA until it finds its consensus sequence, where it cleaves and resolves the cruciform DNA. In Pelobacter propionicus (strain DSM 2379 / NBRC 103807 / OttBd1), this protein is Crossover junction endodeoxyribonuclease RuvC.